Consider the following 705-residue polypeptide: Lethal(3)malignant brain tumor-like protein 2 (705 aa).

Residues 1-84 (MEKPRSIEET…GTPRSLDGSG (84 aa)) are disordered. Position 13 is a phosphoserine (Ser13). A compositionally biased stretch (acidic residues) spans 15-25 (PMEEEEDDDLE). Over residues 38–49 (SSVGSESSSYLE) the composition is skewed to low complexity. The segment covering 50–60 (ESSEAENEDRE) has biased composition (acidic residues). Residue Ser67 is modified to Phosphoserine. A Phosphothreonine modification is found at Thr76. Residues 81-116 (DGSGSEPAVCEMCGIVGTREAFFSKTKRFCSVSCSR) form an FCS-type zinc finger. Positions 90, 93, 110, and 114 each coordinate Zn(2+). MBT repeat units lie at residues 179-283 (FDWG…LVPP), 291-391 (TDWK…IKMS), 397-500 (MAHH…LTPP), and 508-604 (FNWE…LQPP). Ser338 bears the Phosphoserine mark. A Glycyl lysine isopeptide (Lys-Gly) (interchain with G-Cter in SUMO2) cross-link involves residue Lys405. The interval 608-665 (EPATPLKAKEATKKKKKQFGKKRKRIPPTKTRPLRQGSKKPLLEDDPQGARKISSEPV) is disordered. Positions 619–634 (TKKKKKQFGKKRKRIP) are enriched in basic residues. Glycyl lysine isopeptide (Lys-Gly) (interchain with G-Cter in SUMO2) cross-links involve residues Lys647, Lys659, and Lys675. The tract at residues 680 to 705 (DVASPDKASSPELPVSVENIKQETDD) is disordered. A phosphoserine mark is found at Ser683, Ser688, and Ser689. Residue Lys700 forms a Glycyl lysine isopeptide (Lys-Gly) (interchain with G-Cter in SUMO1); alternate linkage. Residue Lys700 forms a Glycyl lysine isopeptide (Lys-Gly) (interchain with G-Cter in SUMO2); alternate linkage.

Part of the E2F6.com-1 complex in G0 phase composed of E2F6, MGA, MAX, TFDP1, CBX3, BAT8, EUHMTASE1, RING1, RNF2, MBLR, BAT8 and YAF2.

The protein localises to the nucleus. Functionally, putative Polycomb group (PcG) protein. PcG proteins maintain the transcriptionally repressive state of genes, probably via a modification of chromatin, rendering it heritably changed in its expressibility. Its association with a chromatin-remodeling complex suggests that it may contribute to prevent expression of genes that trigger the cell into mitosis. Binds to monomethylated and dimethylated 'Lys-20' on histone H4. Binds histone H3 peptides that are monomethylated or dimethylated on 'Lys-4', 'Lys-9' or 'Lys-27'. This is Lethal(3)malignant brain tumor-like protein 2 (L3MBTL2) from Homo sapiens (Human).